The sequence spans 211 residues: MNVFTSSVGSVEFDHPLLLENDLTSLSINCDDVHCSSRALCYIYDIHSSRHPSIDEHQFLRLLHGPDDAVTLGSFLKTLIWILSHDKNLPEEYRLPTIMMSSSYVKFFTEVKPRPPSTNCWTCRMSKDNLPFTVPSVKGFPPDAELYIVPISDHDGKPVKFDNRKTLYRSPSKKRHKYVISSDKPPLSARYVKYVDSSALESSPGSSPAVL.

The protein belongs to the tenuiviruses p3 protein family. In terms of assembly, homodimer.

Its subcellular location is the host cytoplasm. Acts as a suppressor of RNA-mediated gene silencing, also known as post-transcriptional gene silencing (PTGS), presumably through the binding of dsRNA. This Avena sativa (Oat) protein is Suppressor of RNA silencing p3.